We begin with the raw amino-acid sequence, 874 residues long: MSRFFVSGYTSDSSSEEEDLLSTSEEELLSSSDEGEDNESDSSFFGEDDDESEESSSDDEDGRPSGPAYFLKKSFLKGAGGDDSDSDSDDEGRKVVKSAKDKLLDDMKSSIEIINSNKYNNNWSIVLGEFDKFGRFLIRCNQTNLGTPKFYIKLLTSLDNSITETSNNERDDKTLKADEARAFNTLRQRIKKQIREFQVYYDLYKENPEEFDENEDEPLESVQAGLNDNVKNEADNSNVGALASNRVLSPIFHTLKTISESRGKKNIDKLEQIATLEKLLEANVSKSSPFELISIYQMLLSVRFDASSNQAFMPLEQWQKNEQDLGKLLDLLEANVDTYQVSELGSTTDDIDIEPVANAQGVKVIFGSITSSIDRLDDELTKSLQHTDPHSTEYVERLKDESTIYNLIVRGQAYVESITPEDVKYKSEQLARIVLRRLEHIYYKPKQLIKANEEEAWRNIEYNSSIVSKGSSVDEVIDQLTEFLQKQQKNKTYGKHAILFSIYYYAVNSQYEKAKELFLRSQFYSNINSAESSLQVQYNRALVQLGLSAFRAGSIEESHKILNEIVNSQRSKELLGQGFNSKFPNQATVLERQKLLPFHQHINLELLECVFMTCSLLIEIPTLAAIANNHKDSKRKNASLKSFKSKLDFHDRQFFTGPPESIKDHIVHASIALQKGDWLKSYNLLSSIKIWKLFPDNDKLLAMMKNQLQIEGLRTYIFTYKSVFKKLSIEKLQQIFQLSKDEVVSILEKMITTGNVSGGEIIDNKFISFTSTTEPQRSKLQELAIVLNEKIQLLTEKNEKTQSNGYGKKQQNKDQQNQQQQNQNQNQQQQQNQQQQQQQQSSQQQSNNILSEESANKFRYANVNSNNDEFQATA.

The disordered stretch occupies residues 1-70 (MSRFFVSGYT…DGRPSGPAYF (70 aa)). A compositionally biased stretch (acidic residues) spans 14-61 (SSEEEDLLSTSEEELLSSSDEGEDNESDSSFFGEDDDESEESSSDDED). In terms of domain architecture, PCI spans 598-774 (FHQHINLELL…KFISFTSTTE (177 aa)). The tract at residues 797–874 (KNEKTQSNGY…SNNDEFQATA (78 aa)) is disordered. Positions 813–848 (KDQQNQQQQNQNQNQQQQQNQQQQQQQQSSQQQSNN) are enriched in low complexity. The span at 862–874 (NVNSNNDEFQATA) shows a compositional bias: polar residues.

Belongs to the eIF-3 subunit C family. As to quaternary structure, component of the eukaryotic translation initiation factor 3 (eIF-3) complex.

It localises to the cytoplasm. Its function is as follows. Component of the eukaryotic translation initiation factor 3 (eIF-3) complex, which is involved in protein synthesis of a specialized repertoire of mRNAs and, together with other initiation factors, stimulates binding of mRNA and methionyl-tRNAi to the 40S ribosome. The eIF-3 complex specifically targets and initiates translation of a subset of mRNAs involved in cell proliferation. This chain is Eukaryotic translation initiation factor 3 subunit C, found in Candida albicans (strain SC5314 / ATCC MYA-2876) (Yeast).